We begin with the raw amino-acid sequence, 186 residues long: Lipid A acyltransferase PagP (186 aa).

Positions 1 to 25 (MNVSKYVAIFSFVFIQLISVGKVFA) are cleaved as a signal peptide. Active-site residues include His-58, Asp-101, and Ser-102.

Belongs to the lipid A palmitoyltransferase family. As to quaternary structure, homodimer.

The protein localises to the cell outer membrane. The catalysed reaction is a lipid A + a 1,2-diacyl-sn-glycero-3-phosphocholine = a hepta-acyl lipid A + a 2-acyl-sn-glycero-3-phosphocholine. It carries out the reaction a lipid IVA + a 1,2-diacyl-sn-glycero-3-phosphocholine = a lipid IVB + a 2-acyl-sn-glycero-3-phosphocholine. The enzyme catalyses a lipid IIA + a 1,2-diacyl-sn-glycero-3-phosphocholine = a lipid IIB + a 2-acyl-sn-glycero-3-phosphocholine. In terms of biological role, transfers a fatty acid residue from the sn-1 position of a phospholipid to the N-linked hydroxyfatty acid chain on the proximal unit of lipid A or its precursors. The polypeptide is Lipid A acyltransferase PagP (Shigella boydii serotype 4 (strain Sb227)).